A 327-amino-acid polypeptide reads, in one-letter code: Aspartate carbamoyltransferase catalytic subunit (327 aa).

Positions 67 and 68 each coordinate carbamoyl phosphate. Lys-95 lines the L-aspartate pocket. Residues Arg-117, His-145, and Gln-148 each coordinate carbamoyl phosphate. L-aspartate is bound by residues Arg-178 and Arg-232. Gly-273 and Pro-274 together coordinate carbamoyl phosphate.

Belongs to the aspartate/ornithine carbamoyltransferase superfamily. ATCase family. In terms of assembly, heterododecamer (2C3:3R2) of six catalytic PyrB chains organized as two trimers (C3), and six regulatory PyrI chains organized as three dimers (R2).

It carries out the reaction carbamoyl phosphate + L-aspartate = N-carbamoyl-L-aspartate + phosphate + H(+). It functions in the pathway pyrimidine metabolism; UMP biosynthesis via de novo pathway; (S)-dihydroorotate from bicarbonate: step 2/3. Catalyzes the condensation of carbamoyl phosphate and aspartate to form carbamoyl aspartate and inorganic phosphate, the committed step in the de novo pyrimidine nucleotide biosynthesis pathway. The sequence is that of Aspartate carbamoyltransferase catalytic subunit from Parvibaculum lavamentivorans (strain DS-1 / DSM 13023 / NCIMB 13966).